The sequence spans 686 residues: MEVVTFGDVAVHFSREEWQCLDPGQRALYREVMLENHSSVAGLAGFLVFKPELISRLEQGEEPWVLDLQGAEGTEAPRTSKTDSTIRTENEQACEDMDILKSESYGTVVRISPQDFPQNPGFGDVSDSEVWLDSHLGSPGLKVTGFTFQNNCLNEETVVPKTFTKDAPQGCKELGSSGLDCQPLESQGESAEGMSQRCEECGKGIRATSDIALHWEINTQKISRCQECQKKLSDCLQGKHTNNCHGEKPYECAECGKVFRLCSQLNQHQRIHTGEKPFKCTECGKAFRLSSKLIQHQRIHTGEKPYRCEECGKAFGQSSSLIHHQRIHTGERPYGCRECGKAFSQQSQLVRHQRTHTGERPYPCKECGKAFSQSSTLAQHQRMHTGEKAQILKASDSPSLVAHQRIHAVEKPFKCDECGKAFRWISRLSQHQLIHTGEKPYKCNKCTKAFGCSSRLIRHQRTHTGEKPFKCDECGKGFVQGSHLIQHQRIHTGEKPYVCNDCGKAFSQSSSLIYHQRIHKGEKPYECLQCGKAFSMSTQLTIHQRVHTGERPYKCNECGKAFSQNSTLFQHQIIHAGVKPYECSECGKAFSRSSYLIEHQRIHTRAQWFYEYGNALEGSIFVSRKKVNTIKKLHQCEDCEKIFRWRSHLIIHQRIHTGEKPYKCNDCGKAFNRSSRLTQHQKIHMG.

The region spanning 4 to 76 (VTFGDVAVHF…DLQGAEGTEA (73 aa)) is the KRAB domain. Residues K81 and K101 each participate in a glycyl lysine isopeptide (Lys-Gly) (interchain with G-Cter in SUMO2) cross-link. Residues S126 and S138 each carry the phosphoserine modification. 6 consecutive C2H2-type zinc fingers follow at residues 223 to 245 (SRCQ…NNCH), 250 to 272 (YECA…QRIH), 278 to 300 (FKCT…QRIH), 306 to 328 (YRCE…QRIH), 334 to 356 (YGCR…QRTH), and 362 to 384 (YPCK…QRMH). Residues K279 and K292 each participate in a glycyl lysine isopeptide (Lys-Gly) (interchain with G-Cter in SUMO2) cross-link. K393 participates in a covalent cross-link: Glycyl lysine isopeptide (Lys-Gly) (interchain with G-Cter in SUMO2). 9 C2H2-type zinc fingers span residues 413–435 (FKCD…QLIH), 441–463 (YKCN…QRTH), 469–491 (FKCD…QRIH), 497–519 (YVCN…QRIH), 525–547 (YECL…QRVH), 553–575 (YKCN…QIIH), 581–603 (YECS…QRIH), 634–656 (HQCE…QRIH), and 662–684 (YKCN…QKIH).

Belongs to the krueppel C2H2-type zinc-finger protein family.

The protein localises to the nucleus. May be involved in transcriptional regulation. The sequence is that of Zinc finger protein 7 (ZNF7) from Pongo abelii (Sumatran orangutan).